The chain runs to 1182 residues: Intraflagellar transport protein 122 homolog (1182 aa).

8 WD repeats span residues 10–50 (KAEQ…QPLK), 51–91 (GHKD…LKYT), 93–129 (NDSI…VSKH), 131–169 (SSSK…KVKI), 174–217 (GSLS…IGKD), 219–258 (PLNF…LGTV), 260–300 (EQNS…HGLY), and 453–492 (KQAT…LLFQ).

Component of the IFT complex A (IFT-A) complex. IFT-A complex is divided into a core subcomplex composed of IFT122:IFT140:WDR19 which is associated with TULP3 and a peripheral subcomplex composed of IFT43:WDR35:TTC21B. Interacts with IFT43:WDR35; the interaction connects the 2 IFT-A subcomplexes. Interacts with IFTAP; the interaction associates IFTAP with IFT-A complex.

The protein localises to the cell projection. It localises to the cilium. Its subcellular location is the cytoplasm. It is found in the cytoskeleton. The protein resides in the cilium basal body. In terms of biological role, as a component of the IFT complex A (IFT-A), a complex required for retrograde ciliary transport and entry into cilia of G protein-coupled receptors (GPCRs), it is required in ciliogenesis and ciliary protein trafficking. Involved in cilia formation during neuronal patterning. Acts as a negative regulator of Shh signaling. Required to recruit TULP3 to primary cilia. This Mus musculus (Mouse) protein is Intraflagellar transport protein 122 homolog.